Here is a 50-residue protein sequence, read N- to C-terminus: uncharacterized protein (50 aa).

This is an uncharacterized protein from Thermoproteus tenax virus 1 (strain KRA1) (TTV1).